The sequence spans 110 residues: Thioredoxin Asp f 29 (110 aa).

A Thioredoxin domain is found at methionine 1 to alanine 110. Active-site nucleophile residues include cysteine 34 and cysteine 37. A disulfide bond links cysteine 34 and cysteine 37.

It belongs to the thioredoxin family.

Participates in various redox reactions through the reversible oxidation of its active center dithiol to a disulfide and catalyzes dithiol-disulfide exchange reactions. In Aspergillus fumigatus (Neosartorya fumigata), this protein is Thioredoxin Asp f 29.